Reading from the N-terminus, the 143-residue chain is Large ribosomal subunit protein uL15 (143 aa).

The protein belongs to the universal ribosomal protein uL15 family. As to quaternary structure, part of the 50S ribosomal subunit.

Binds to the 23S rRNA. The protein is Large ribosomal subunit protein uL15 of Methanococcus aeolicus (strain ATCC BAA-1280 / DSM 17508 / OCM 812 / Nankai-3).